We begin with the raw amino-acid sequence, 111 residues long: MICOS complex subunit MIC13 (111 aa).

A helical transmembrane segment spans residues 8-26 (VVKFATKVTIAGGALYVAY).

It belongs to the MICOS complex subunit Mic13 family. In terms of assembly, component of the mitochondrial contact site and cristae organizing system (MICOS) complex.

Its subcellular location is the mitochondrion inner membrane. Its function is as follows. Component of the MICOS complex, a large protein complex of the mitochondrial inner membrane that plays crucial roles in the maintenance of crista junctions, inner membrane architecture, and formation of contact sites to the outer membrane. Constituent of mature MICOS complex, it is required for the formation of cristae junction (CJ) and maintenance of cristae morphology. Required for the incorporation of MIC10 into the MICOS complex. The polypeptide is MICOS complex subunit MIC13 (Danio rerio (Zebrafish)).